Here is a 468-residue protein sequence, read N- to C-terminus: Probable 1,4-beta-D-glucan cellobiohydrolase C (468 aa).

The N-terminal stretch at 1–18 (MGRVSSLALALLLPAVQA) is a signal peptide. A CBM1 domain is found at 19 to 54 (QQTLWGQCGGIGWTGPTNCVAGAACSTQNPYYAQCL). Intrachain disulfides connect C26-C43 and C37-C53. The interval 57-106 (TATTSTTLTTTTRVTTTTTSTTSKSSSTGSTTTTKSTGTTTTSGSSTTIT) is thr-rich linker. The disordered stretch occupies residues 68 to 107 (TRVTTTTTSTTSKSSSTGSTTTTKSTGTTTTSGSSTTITS). The catalytic stretch occupies residues 107-468 (SAPSGNPFSG…QLLKNANPAF (362 aa)). D198 is a catalytic residue. 2 cysteine pairs are disulfide-bonded: C199–C258 and C390–C437. D244 acts as the Proton donor in catalysis. D423 acts as the Nucleophile in catalysis.

It belongs to the glycosyl hydrolase 6 (cellulase B) family.

It localises to the secreted. The catalysed reaction is Hydrolysis of (1-&gt;4)-beta-D-glucosidic linkages in cellulose and cellotetraose, releasing cellobiose from the non-reducing ends of the chains.. Functionally, the biological conversion of cellulose to glucose generally requires three types of hydrolytic enzymes: (1) Endoglucanases which cut internal beta-1,4-glucosidic bonds; (2) Exocellobiohydrolases that cut the disaccharide cellobiose from the non-reducing end of the cellulose polymer chain; (3) Beta-1,4-glucosidases which hydrolyze the cellobiose and other short cello-oligosaccharides to glucose. The protein is Probable 1,4-beta-D-glucan cellobiohydrolase C (cbhC) of Aspergillus terreus (strain NIH 2624 / FGSC A1156).